Here is a 379-residue protein sequence, read N- to C-terminus: Guanine nucleotide-binding protein G(s) subunit alpha (379 aa).

The tract at residues 1–29 is disordered; it reads MGCFGSAGAKGDAEENKKRKEANKNINKQ. The N-palmitoyl glycine moiety is linked to residue Gly2. Cys3 carries S-palmitoyl cysteine lipidation. In terms of domain architecture, G-alpha spans 39-379; it reads ATHRLLLLGA…RMHLRQYELL (341 aa). The segment at 42-55 is G1 motif; sequence RLLLLGAGESGKST. Residues 47–54, 183–189, 208–212, 277–280, and Ala351 contribute to the GTP site; these read GAGESGKS, LRCRVLT, DVGGQ, and NKQD. 2 residues coordinate Mg(2+): Ser54 and Thr189. The G2 motif stretch occupies residues 181–189; sequence DILRCRVLT. Positions 204–213 are G3 motif; that stretch reads FHMFDVGGQR. A G4 motif region spans residues 273–280; the sequence is ILFLNKQD. Positions 349-354 are G5 motif; it reads TCAVDT.

The protein belongs to the G-alpha family. G(s) subfamily. In terms of assembly, g proteins are composed of 3 units; alpha, beta and gamma. The alpha chain contains the guanine nucleotide binding site.

Guanine nucleotide-binding proteins (G proteins) are involved as modulators or transducers in various transmembrane signaling systems. The G(s) protein is involved in hormonal regulation of adenylate cyclase: it activates the cyclase in response to beta-adrenergic stimuli. The polypeptide is Guanine nucleotide-binding protein G(s) subunit alpha (Homarus americanus (American lobster)).